Reading from the N-terminus, the 200-residue chain is Recombination protein RecR (200 aa).

The segment at cysteine 58–cysteine 73 adopts a C4-type zinc-finger fold. In terms of domain architecture, Toprim spans asparagine 81–proline 176.

The protein belongs to the RecR family.

Its function is as follows. May play a role in DNA repair. It seems to be involved in an RecBC-independent recombinational process of DNA repair. It may act with RecF and RecO. This is Recombination protein RecR from Desulforamulus reducens (strain ATCC BAA-1160 / DSM 100696 / MI-1) (Desulfotomaculum reducens).